We begin with the raw amino-acid sequence, 511 residues long: Glucans biosynthesis protein G (511 aa).

A signal peptide spans 1-22; that stretch reads MMKMRWLSAAVMLTLYTSSSWA.

This sequence belongs to the OpgD/OpgG family.

It localises to the periplasm. It participates in glycan metabolism; osmoregulated periplasmic glucan (OPG) biosynthesis. In terms of biological role, involved in the biosynthesis of osmoregulated periplasmic glucans (OPGs). The chain is Glucans biosynthesis protein G from Escherichia fergusonii (strain ATCC 35469 / DSM 13698 / CCUG 18766 / IAM 14443 / JCM 21226 / LMG 7866 / NBRC 102419 / NCTC 12128 / CDC 0568-73).